A 2645-amino-acid polypeptide reads, in one-letter code: Non-reducing polyketide synthase AC (2645 aa).

The N-terminal acylcarrier protein transacylase domain (SAT) stretch occupies residues 73-2366; that stretch reads ALQNLNEWLK…TDIVHNAWPM (2294 aa). H260 (proton donor/acceptor; for transacylase activity) is an active-site residue. The Ketosynthase family 3 (KS3) domain occupies 416–834; it reads DDKIAVIGMA…GSNSSLVVTE (419 aa). Catalysis depends on for beta-ketoacyl synthase activity residues C583, H718, and H757. The malonyl-CoA:ACP transacylase (MAT) domain stretch occupies residues 943 to 1252; that stretch reads CFGGQISTYI…HAVSITTDKS (310 aa). An N-terminal hotdog fold region spans residues 1324-1457; the sequence is SKGFTSFAGY…GVCSFCSATD (134 aa). Positions 1324-1637 constitute a PKS/mFAS DH domain; the sequence is SKGFTSFAGY…YNKVPLPVMR (314 aa). The interval 1330-1641 is product template (PT) domain; the sequence is FAGYIDGNQR…PLPVMRGILG (312 aa). The active-site Proton acceptor; for dehydratase activity is H1359. The C-terminal hotdog fold stretch occupies residues 1487–1637; sequence NIMQGTANIY…YNKVPLPVMR (151 aa). Residue D1542 is the Proton donor; for dehydratase activity of the active site. Residues 1684 to 1696 show a composition bias toward polar residues; that stretch reads NGTTGTENPQIKS. Residues 1684 to 1716 form a disordered region; it reads NGTTGTENPQIKSKTNKVKKVPTRKSGGSDLET. Positions 1697 to 1706 are enriched in basic residues; that stretch reads KTNKVKKVPT. Positions 1711–1788 constitute a Carrier domain; the sequence is GSDLETPAKT…SLVKYIREIR (78 aa). S1748 carries the post-translational modification O-(pantetheine 4'-phosphoryl)serine. A compositionally biased stretch (acidic residues) spans 1794-1805; sequence QNVDDSESESEE. The segment at 1794 to 1816 is disordered; that stretch reads QNVDDSESESEELQQQATPIDSA. Y2009 acts as the For methyltransferase activity in catalysis. A methyltransferase (CMeT) domain region spans residues 2023–2197; that stretch reads EVFVEKIGSS…SVGYGHVDWT (175 aa). The tract at residues 2269-2573 is NADPH-binding (R) domain; the sequence is CVLITGATGS…NIIPFYDWVQ (305 aa).

The protein operates within mycotoxin biosynthesis. In terms of biological role, non-reducing polyketide synthase; part of the gene cluster that mediates the biosynthesis of the selective antifungal agent ascochitine, an o-quinone methide that plays a possible protective role against other microbial competitors in nature and is considered to be important for pathogenicity of legume-associated Didymella species. The pathway probably begins with the synthesis of a keto-aldehyde intermediate by the ascochitine non-reducing polyketide synthase pksAC from successive condensations of 4 malonyl-CoA units, presumably with a simple acetyl-CoA starter unit. Release of the keto-aldehyde intermediate is consistent with the presence of the C-terminal reductive release domain. The HR-PKS (orf7) probably makes a diketide starter unit which is passed to the non-reducing polyketide synthase pksAC for further extension, producing ascochital and ascochitine. The aldehyde dehydrogenase (orf1), the 2-oxoglutarate-dependent dioxygenase (orf3) and the dehydrogenase (orf9) are probably involved in subsequent oxidations of methyl groups to the carboxylic acid of the heterocyclic ring. The ascochitine gene cluster also includes a gene encoding a short peptide (orf2) that is often found in secondary metabolite gene clusters and which function has still to be determined. This Didymella fabae (Leaf and pod spot disease fungus) protein is Non-reducing polyketide synthase AC.